Consider the following 385-residue polypeptide: Protein-glutamate methylesterase/protein-glutamine glutaminase (385 aa).

Asp53 bears the 4-aspartylphosphate mark. Residues Lys196–Ser385 form the CheB-type methylesterase domain. Active-site residues include Ser208, His234, and Asp330.

This sequence belongs to the CheB family. Phosphorylated by CheA. Phosphorylation of the N-terminal regulatory domain activates the methylesterase activity.

It is found in the cytoplasm. It carries out the reaction [protein]-L-glutamate 5-O-methyl ester + H2O = L-glutamyl-[protein] + methanol + H(+). It catalyses the reaction L-glutaminyl-[protein] + H2O = L-glutamyl-[protein] + NH4(+). Involved in chemotaxis. Part of a chemotaxis signal transduction system that modulates chemotaxis in response to various stimuli. Catalyzes the demethylation of specific methylglutamate residues introduced into the chemoreceptors (methyl-accepting chemotaxis proteins or MCP) by CheR. Also mediates the irreversible deamidation of specific glutamine residues to glutamic acid. This Borreliella burgdorferi (strain ATCC 35210 / DSM 4680 / CIP 102532 / B31) (Borrelia burgdorferi) protein is Protein-glutamate methylesterase/protein-glutamine glutaminase.